The primary structure comprises 402 residues: tRNA pseudouridine synthase Pus10 (402 aa).

One can recognise a THUMP domain in the interval 37–159 (RLRGERLVEK…QIRVHVQINP (123 aa)). The active-site Nucleophile is Asp228. Substrate-binding residues include Tyr296 and Tyr364.

Belongs to the pseudouridine synthase Pus10 family.

The catalysed reaction is uridine(54) in tRNA = pseudouridine(54) in tRNA. It catalyses the reaction uridine(55) in tRNA = pseudouridine(55) in tRNA. Functionally, responsible for synthesis of pseudouridine from uracil-54 and uracil-55 in the psi GC loop of transfer RNAs. The chain is tRNA pseudouridine synthase Pus10 from Methanothermobacter marburgensis (strain ATCC BAA-927 / DSM 2133 / JCM 14651 / NBRC 100331 / OCM 82 / Marburg) (Methanobacterium thermoautotrophicum).